The following is a 1352-amino-acid chain: MSSKSQQPPTGLSKSAAKKRAKKAAKQSQNPQPQSAPQTSSQTPASVPPLPPASVPDPLDPAFFNFPGPGSYPIDVQYDDTAYYDQVDVPLNQGDFPGSYSIDYNLSLQNGSQLAGLSAPFNITHDDLISAANELYKRMADPEFGSDDAYWSSLPPHIRQFIRDAVPFTGSISQSTPGTTSSQRTMYQMAQQIVQAASQGMGLGHGMSANLMPGINANARSFPSPQQTIGEEFGFHRHPDTREEEYDDEEEIEEDQGHPAANGDAPKKKNKKKKKKGANAASLSAPVEPPAPLPPLPPPSTLSKIPRAPAPVPQPQLPTHQPQPLSQQPPSLNPLPPPAPASAPTPTPPSSRAAGKQPMGTNPPANPPARSARAAGKAPASAAPPHNAHAGHSHNHPSTAKPAPKGKSPATAPPAKIWTQSSAEDRENIRVFWLGLSEAERRDLLRIEKDAVLKKMKEQHRHSCGCAVCGRKKVNIEMELDQLYEQYYDELRSYAAEQRVAANGLRPPPSGAGPFPGSVEVDASGTVTQYDHRAPELHDHDPDDLDGEESEEYDDDDDYADDDELDDDDIGTDEADVGDEIDEPPPPPPITHRQQPRRPPVKAPPRSEGGDDFLSFGSNLATIKGILTIADDMLKNDGTKFLEMMEQLAIRRSVREEQNLRDMQEETDEEEEEEDDDESRDEPMTEKERAEEGKRMFQIFAARMFEQRVLQAYRERVAKQREEQLLRELEEEEDSKRAKEEKKAKEAQKKKDKKKAQKQKAEEERLAREAALEEEKRQAKLRKEEAERERMRRQDEERVRREAVKRAAQEEAQRQALERKRRQQEEKEREEEAAKKKREREEKAKKEREARENELKEKERKEREIKAAKEKAEKERIAKETLEKAERDRLAKEAKEKAEKIRQERLEASRMEKVRKEEAARKEREAVEQAKIIAAQQAQRERAAKAEKNTADKAAAERISAARVIPVAATAPVLATLGLKSPSKGSTPQSAPPVPQLSPVKGAARPITNATPGRSMQKTPTAYYPQPVPPVGVASFSRMPLAQSFGPPGLRPAYPTGSPAYSPPRANGSSISPNPPSRGFTDPSPPGFDHNLRTAPIGVGFPPVKPSGRIPSMADDAFSPTAPIGVPVTRSVSSAGEMGSLISGSVTPDDYRPTPPAPIAPPNLGPIGRPSFSDGQTSGPNVLRSTSPPPPDRVLGSAALGADDEIVQPQQRRPTTSWDMPTAAPGSGRWSASPSIWGSGDPTPAPSWGAPGSMPTVAERPGPPPGLSLSPGAGVNVLGQRQPSFGGIGSSFGGVGAVGSVIGGGMGGTAGSGLVQGHVGGGGYSQGLFSPQHQQQQQLQLQLQLQQQQQQQ.

Positions 1-12 (MSSKSQQPPTGL) are enriched in polar residues. Disordered regions lie at residues 1 to 66 (MSSK…FFNF), 216 to 422 (NANA…TQSS), 503 to 522 (NGLR…VEVD), 531 to 616 (DHRA…FLSF), 651 to 693 (RRSV…AEEG), 726 to 880 (LREL…IAKE), 978 to 1118 (GLKS…DDAF), 1139 to 1275 (GSLI…GAGV), and 1307 to 1336 (GGTA…HQQQ). A compositionally biased stretch (basic residues) spans 16 to 25 (AAKKRAKKAA). Residues 26–45 (KQSQNPQPQSAPQTSSQTPA) are compositionally biased toward low complexity. Residues 46–59 (SVPPLPPASVPDPL) show a composition bias toward pro residues. Residues 218–229 (NARSFPSPQQTI) show a composition bias toward polar residues. A compositionally biased stretch (acidic residues) spans 242–254 (REEEYDDEEEIEE). Positions 268 to 277 (KKNKKKKKKG) are enriched in basic residues. A compositionally biased stretch (pro residues) spans 287-300 (VEPPAPLPPLPPPS). Low complexity predominate over residues 317-330 (LPTHQPQPLSQQPP). A compositionally biased stretch (pro residues) spans 331 to 349 (SLNPLPPPAPASAPTPTPP). Residues 368-388 (PARSARAAGKAPASAAPPHNA) show a composition bias toward low complexity. The segment covering 531–541 (DHRAPELHDHD) has biased composition (basic and acidic residues). Residues 542 to 583 (PDDLDGEESEEYDDDDDYADDDELDDDDIGTDEADVGDEIDE) show a composition bias toward acidic residues. Basic and acidic residues predominate over residues 653–664 (SVREEQNLRDMQ). Residues 665-680 (EETDEEEEEEDDDESR) are compositionally biased toward acidic residues. Composition is skewed to basic and acidic residues over residues 681–693 (DEPM…AEEG), 726–749 (LREL…EAQK), and 759–880 (QKAE…IAKE). A coiled-coil region spans residues 712 to 943 (AYRERVAKQR…AAQQAQRERA (232 aa)). The span at 1008 to 1020 (TNATPGRSMQKTP) shows a compositional bias: polar residues. A compositionally biased stretch (pro residues) spans 1153–1164 (PTPPAPIAPPNL). Polar residues-rich tracts occupy residues 1173 to 1186 (SDGQ…LRST) and 1208 to 1219 (QPQQRRPTTSWD).

Belongs to the NST1 family.

The protein localises to the cytoplasm. May act as a negative regulator of salt tolerance. This is Stress response protein NST1 (NST1) from Cryptococcus neoformans var. neoformans serotype D (strain JEC21 / ATCC MYA-565) (Filobasidiella neoformans).